Consider the following 261-residue polypeptide: Small ribosomal subunit protein eS1 (261 aa).

Basic residues predominate over residues Met-1–Lys-18. Residues Met-1–Pro-23 form a disordered region.

The protein belongs to the eukaryotic ribosomal protein eS1 family. As to quaternary structure, component of the small ribosomal subunit. Mature ribosomes consist of a small (40S) and a large (60S) subunit. The 40S subunit contains about 33 different proteins and 1 molecule of RNA (18S). The 60S subunit contains about 49 different proteins and 3 molecules of RNA (25S, 5.8S and 5S).

It is found in the cytoplasm. The chain is Small ribosomal subunit protein eS1 (cyc07) from Nicotiana tabacum (Common tobacco).